Consider the following 341-residue polypeptide: Methionine import ATP-binding protein MetN (341 aa).

The 242-residue stretch at 6–247 (IEIKKLSKNF…PQHQATRHLL (242 aa)) folds into the ABC transporter domain. 44-51 (GMSGAGKS) serves as a coordination point for ATP.

It belongs to the ABC transporter superfamily. Methionine importer (TC 3.A.1.24) family. As to quaternary structure, the complex is composed of two ATP-binding proteins (MetN), two transmembrane proteins (MetI) and a solute-binding protein (MetQ).

It localises to the cell inner membrane. The catalysed reaction is L-methionine(out) + ATP + H2O = L-methionine(in) + ADP + phosphate + H(+). It carries out the reaction D-methionine(out) + ATP + H2O = D-methionine(in) + ADP + phosphate + H(+). Functionally, part of the ABC transporter complex MetNIQ involved in methionine import. Responsible for energy coupling to the transport system. This Protochlamydia amoebophila (strain UWE25) protein is Methionine import ATP-binding protein MetN.